The sequence spans 489 residues: Dihydropyrimidinase 1 (489 aa).

Zn(2+) contacts are provided by His61, His63, and Lys156. At Lys156 the chain carries N6-carboxylysine. Residue Tyr161 coordinates substrate. Residues His189 and His245 each contribute to the Zn(2+) site. A substrate-binding site is contributed by Ser295. Asp323 is a binding site for Zn(2+). Residue Asn344 coordinates substrate.

The protein belongs to the metallo-dependent hydrolases superfamily. Hydantoinase/dihydropyrimidinase family. Homotetramer. Requires Zn(2+) as cofactor. Post-translationally, carboxylation allows a single lysine to coordinate two zinc ions. In terms of tissue distribution, in L1-L2 larvae, expressed in body hypodermal cells, hemidesmosomes and in a neuronal cell between the pharynx and ring neuropil. In adults, expression is seen in body hypodermal cells and pharynx.

It is found in the nucleus. The enzyme catalyses 5,6-dihydrouracil + H2O = 3-(carbamoylamino)propanoate + H(+). The protein is Dihydropyrimidinase 1 (dhp-1) of Caenorhabditis elegans.